Here is a 209-residue protein sequence, read N- to C-terminus: MGKFQIISHPLIQHKLSILRRKDTSTKHFRELVNEIAMLMGYEVSRELPLEEVEIETPITKTVQKQLTGKKLAIVPILRAGIGMVDGLLSLVPAAKVGHIGMYRDEETLEPVEYLVKLPEDIDQRQIFVVDPMLATGGSAVLAIDSLKKRGAANIKFVCLVSAPEGLKKLQEAHPDIDIYTAALDEKLNEKGYIVPGLGDAGDRLFGTK.

5-phospho-alpha-D-ribose 1-diphosphate is bound by residues Arg79, Arg104, and 131 to 139 (DPMLATGGS). Uracil contacts are provided by residues Ile194 and 199–201 (GDA). Asp200 lines the 5-phospho-alpha-D-ribose 1-diphosphate pocket.

The protein belongs to the UPRTase family. Mg(2+) is required as a cofactor.

The enzyme catalyses UMP + diphosphate = 5-phospho-alpha-D-ribose 1-diphosphate + uracil. Its pathway is pyrimidine metabolism; UMP biosynthesis via salvage pathway; UMP from uracil: step 1/1. Its activity is regulated as follows. Allosterically activated by GTP. Catalyzes the conversion of uracil and 5-phospho-alpha-D-ribose 1-diphosphate (PRPP) to UMP and diphosphate. This Streptococcus mutans serotype c (strain ATCC 700610 / UA159) protein is Uracil phosphoribosyltransferase.